Here is a 135-residue protein sequence, read N- to C-terminus: MKNAEPSQRQLRVGEQVRHAVAHILQQGILLDNLLKNMVISVVEVRMSPDLKIAICFVSPLSTVHNASRADVVNALNKHSRFIRGEISHSLRQMKYMPELRFRLDNSFDNFSKIDALLRSPEVARDLHHNDKVGD.

This sequence belongs to the RbfA family. Monomer. Binds 30S ribosomal subunits, but not 50S ribosomal subunits or 70S ribosomes.

It is found in the cytoplasm. Functionally, one of several proteins that assist in the late maturation steps of the functional core of the 30S ribosomal subunit. Associates with free 30S ribosomal subunits (but not with 30S subunits that are part of 70S ribosomes or polysomes). Required for efficient processing of 16S rRNA. May interact with the 5'-terminal helix region of 16S rRNA. The chain is Ribosome-binding factor A from Bartonella henselae (strain ATCC 49882 / DSM 28221 / CCUG 30454 / Houston 1) (Rochalimaea henselae).